We begin with the raw amino-acid sequence, 405 residues long: Mitochondrial outer membrane protein SLC25A46 (405 aa).

The segment at 1 to 77 is disordered; it reads MTSRRPDSFE…PDEAQSAAPP (77 aa). Low complexity predominate over residues 22-37; sequence FSGGYSGRSFNNSSSS. The stretch at 80 to 171 is one Solcar 1 repeat; it reads QLNRFAGFGI…GIISECTPLP (92 aa). Transmembrane regions (helical) follow at residues 87–107, 151–171, 183–203, 242–262, 302–322, and 371–391; these read FGIGLASLFTENVLAHPCIVF, FVVQGVTLGTEGIISECTPLP, VVGHLVLKGLTYVVAMPFYSA, LLPLWNLVLPTVLHGILHYII, FPELMASFAASLCADVLLFPL, and MGFYKGFGSIVVQYSLHATVL. A Solcar 2 repeat occupies 299-401; sequence DAYFPELMAS…QITKMIYSTL (103 aa).

Belongs to the mitochondrial carrier (TC 2.A.29) family.

It is found in the mitochondrion outer membrane. Transmembrane protein of the mitochondrial outer membrane that controls mitochondrial organization. May regulate the biogenesis and dynamics of mitochondrial cristae, the inwards folds of the inner mitochondrial membrane. Could regulate mitochondrial lipid homeostasis and thereby mitochondrial fission. This chain is Mitochondrial outer membrane protein SLC25A46 (slc25a46), found in Danio rerio (Zebrafish).